The following is a 184-amino-acid chain: Female-specific protein transformer (184 aa).

2 stretches are compositionally biased toward basic and acidic residues: residues 1 to 39 (MKMDADSSGTEHRDSRGSRSRSWREREHHGRTSERDSRK) and 49 to 58 (DEVREQDRIR). 2 disordered regions span residues 1 to 123 (MKMD…PKII) and 146 to 184 (YQRLPRPPPFPPAPFRYRQRQPFMGAPRFGYRNAGRPPY). Basic residues-rich tracts occupy residues 59-75 (SLRQRAHQSTRRTRSRS) and 84-114 (SRHRRHRQRSRSRNRSRSRSSERRRRQRSPH). Residues 150-159 (PRPPPFPPAP) show a composition bias toward pro residues.

It is found in the nucleus speckle. Its function is as follows. Member of the regulatory pathway controlling female somatic sexual differentiation, regulated by Sxl. Activates dsx female-specific splicing by promoting the formation of a splicing enhancer complex which consists of tra, tra2 and sr proteins. In Drosophila simulans (Fruit fly), this protein is Female-specific protein transformer (tra).